A 458-amino-acid chain; its full sequence is Flap endonuclease 1 (458 aa).

The N-domain stretch occupies residues 1 to 105; that stretch reads MGIKGLTGLL…GVLSKRFEKR (105 aa). Residue Asp34 coordinates Mg(2+). Residues Arg47 and Arg71 each coordinate DNA. Asp87, Glu159, Glu161, Asp180, and Asp182 together coordinate Mg(2+). Residues 123–254 form an I-domain region; sequence DVDRFSRRTV…KSALKLIREF (132 aa). Glu159 is a binding site for DNA. DNA contacts are provided by Gly232 and Asp234. Residue Asp234 coordinates Mg(2+). Disordered stretches follow at residues 268 to 347 and 416 to 458; these read AAAR…IPDE and GFFT…AKKK. Acidic residues-rich tracts occupy residues 275–285 and 293–309; these read AEEEDEEEAEE and EMPD…DEEE. Residues 310-329 are compositionally biased toward basic and acidic residues; it reads AERRKKAEAAKKKKAQEKAK. Residues 410-418 form an interaction with PCNA region; that stretch reads QQGRLDGFF. Basic and acidic residues predominate over residues 442–452; that stretch reads RKGEDKAEGSG.

It belongs to the XPG/RAD2 endonuclease family. FEN1 subfamily. In terms of assembly, interacts with PCNA. Three molecules of FEN1 bind to one PCNA trimer with each molecule binding to one PCNA monomer. PCNA stimulates the nuclease activity without altering cleavage specificity. It depends on Mg(2+) as a cofactor. Post-translationally, phosphorylated. Phosphorylation upon DNA damage induces relocalization to the nuclear plasma.

The protein localises to the nucleus. It localises to the nucleolus. It is found in the nucleoplasm. Its subcellular location is the mitochondrion. Functionally, structure-specific nuclease with 5'-flap endonuclease and 5'-3' exonuclease activities involved in DNA replication and repair. During DNA replication, cleaves the 5'-overhanging flap structure that is generated by displacement synthesis when DNA polymerase encounters the 5'-end of a downstream Okazaki fragment. It enters the flap from the 5'-end and then tracks to cleave the flap base, leaving a nick for ligation. Also involved in the long patch base excision repair (LP-BER) pathway, by cleaving within the apurinic/apyrimidinic (AP) site-terminated flap. Acts as a genome stabilization factor that prevents flaps from equilibrating into structures that lead to duplications and deletions. Also possesses 5'-3' exonuclease activity on nicked or gapped double-stranded DNA, and exhibits RNase H activity. Also involved in replication and repair of rDNA and in repairing mitochondrial DNA. In Coprinopsis cinerea (strain Okayama-7 / 130 / ATCC MYA-4618 / FGSC 9003) (Inky cap fungus), this protein is Flap endonuclease 1.